Consider the following 534-residue polypeptide: CTP synthase (534 aa).

The tract at residues 1–265 (MKYIVVTGGV…TTRLMKHLKL (265 aa)) is amidoligase domain. CTP is bound at residue serine 12. UTP is bound at residue serine 12. 13–18 (GLGKGI) provides a ligand contact to ATP. Tyrosine 53 contributes to the L-glutamine binding site. Aspartate 70 is a binding site for ATP. Mg(2+) is bound by residues aspartate 70 and glutamate 140. Residues 147 to 149 (DIE), 186 to 191 (KTKPSQ), and lysine 222 contribute to the CTP site. Residues 186–191 (KTKPSQ) and lysine 222 contribute to the UTP site. Positions 289–530 (KLAIVGKYTN…VRAMCKYNKE (242 aa)) constitute a Glutamine amidotransferase type-1 domain. Residue glycine 352 coordinates L-glutamine. The active-site Nucleophile; for glutamine hydrolysis is the cysteine 379. L-glutamine-binding positions include 380–383 (LGMQ), glutamate 403, and arginine 460. Active-site residues include histidine 503 and glutamate 505.

It belongs to the CTP synthase family. Homotetramer.

The catalysed reaction is UTP + L-glutamine + ATP + H2O = CTP + L-glutamate + ADP + phosphate + 2 H(+). It carries out the reaction L-glutamine + H2O = L-glutamate + NH4(+). The enzyme catalyses UTP + NH4(+) + ATP = CTP + ADP + phosphate + 2 H(+). Its pathway is pyrimidine metabolism; CTP biosynthesis via de novo pathway; CTP from UDP: step 2/2. Its activity is regulated as follows. Allosterically activated by GTP, when glutamine is the substrate; GTP has no effect on the reaction when ammonia is the substrate. The allosteric effector GTP functions by stabilizing the protein conformation that binds the tetrahedral intermediate(s) formed during glutamine hydrolysis. Inhibited by the product CTP, via allosteric rather than competitive inhibition. Its function is as follows. Catalyzes the ATP-dependent amination of UTP to CTP with either L-glutamine or ammonia as the source of nitrogen. Regulates intracellular CTP levels through interactions with the four ribonucleotide triphosphates. The sequence is that of CTP synthase from Methanosarcina acetivorans (strain ATCC 35395 / DSM 2834 / JCM 12185 / C2A).